Consider the following 67-residue polypeptide: Cold shock-like protein CspE (67 aa).

One can recognise a CSD domain in the interval 5–64 (GKVKWFNSEKGFGFIEVEGGNDVFVHFSAITGDGFKSLDEGQEVSFEVEDGNRGPQAKNV).

Homodimer.

It localises to the cytoplasm. In terms of biological role, can bind to ATTGG and CCAAT motifs (Y-box motifs) of single-stranded oligonucleotides. This chain is Cold shock-like protein CspE (cspE), found in Bacillus anthracis.